Reading from the N-terminus, the 417-residue chain is Actin-like protein 7B (417 aa).

The segment at 1-39 is disordered; sequence MATKNNPSPKPMGTAQGDPGEAGTLPAPEAGIRDTGSTQ. A Phosphoserine modification is found at Ser-8.

The protein belongs to the actin family.

It is found in the cytoplasm. The protein resides in the cytoskeleton. This is Actin-like protein 7B (Actl7b) from Rattus norvegicus (Rat).